The primary structure comprises 414 residues: Enterobactin exporter EntS (414 aa).

Over 1–21 (MNRQSWLLNLSLLKTHPAFRA) the chain is Cytoplasmic. Residues 22 to 42 (VFLARFISIVSLGLLGVAVPV) form a helical membrane-spanning segment. The Periplasmic portion of the chain corresponds to 43–55 (QIQMMTHSTWQVG). A helical membrane pass occupies residues 56 to 76 (LSVTLTGGAMFIGLMVGGVLA). Topologically, residues 77 to 83 (DRYERKK) are cytoplasmic. A helical transmembrane segment spans residues 84 to 104 (VILLARGTCGIGFIGLCVNAL). The Periplasmic portion of the chain corresponds to 105 to 109 (LPEPS). The chain crosses the membrane as a helical span at residues 110 to 130 (LLAIYLLGLWDGFFASLGVTA). Residues 131–156 (LLAATPALVGRENLMQAGAITMLTVR) lie on the Cytoplasmic side of the membrane. A helical transmembrane segment spans residues 157 to 177 (LGSVISPMLGGILLASGGVAW). Asn178 is a topological domain (periplasmic). A helical transmembrane segment spans residues 179 to 199 (YGLAAAGTFITLLPLLTLPRL). At 200–218 (PVPPQPRENPFIALLAAFR) the chain is on the cytoplasmic side. A helical membrane pass occupies residues 219–239 (FLLASPLIGGIALLGGLVTMA). Residues 240-256 (SAVRVLYPALAMSWQMS) lie on the Periplasmic side of the membrane. Residues 257–277 (AAQIGLLYAAIPLGAAIGALT) form a helical membrane-spanning segment. Over 278–287 (SGQLAHSVRP) the chain is Cytoplasmic. Residues 288–307 (GLIMLVSTVGSFLAVGLFAI) traverse the membrane as a helical segment. Topologically, residues 308–313 (MPIWIA) are periplasmic. A helical transmembrane segment spans residues 314-336 (GVICLALFGWLSAISSLLQYTLL). The Cytoplasmic portion of the chain corresponds to 337–356 (QTQTPENMLGRMNGLWTAQN). The chain crosses the membrane as a helical span at residues 357-377 (VTGDAIGAALLGGLGAMMTPV). Position 378 (Ala378) is a topological domain, periplasmic. A helical membrane pass occupies residues 379 to 399 (SASVSGFGLVIIGLLLLLVLG). Residues 400–414 (ELRRFRQTPPVSDAG) lie on the Cytoplasmic side of the membrane.

This sequence belongs to the major facilitator superfamily. EntS (TC 2.A.1.38) family.

The protein localises to the cell inner membrane. Component of an export pathway for enterobactin. This chain is Enterobactin exporter EntS, found in Salmonella typhi.